A 157-amino-acid polypeptide reads, in one-letter code: Crossover junction endodeoxyribonuclease RuvC (157 aa).

Catalysis depends on residues Asp7, Glu67, and Asp140. Asp7, Glu67, and Asp140 together coordinate Mg(2+).

The protein belongs to the RuvC family. As to quaternary structure, homodimer which binds Holliday junction (HJ) DNA. The HJ becomes 2-fold symmetrical on binding to RuvC with unstacked arms; it has a different conformation from HJ DNA in complex with RuvA. In the full resolvosome a probable DNA-RuvA(4)-RuvB(12)-RuvC(2) complex forms which resolves the HJ. The cofactor is Mg(2+).

It is found in the cytoplasm. The catalysed reaction is Endonucleolytic cleavage at a junction such as a reciprocal single-stranded crossover between two homologous DNA duplexes (Holliday junction).. Functionally, the RuvA-RuvB-RuvC complex processes Holliday junction (HJ) DNA during genetic recombination and DNA repair. Endonuclease that resolves HJ intermediates. Cleaves cruciform DNA by making single-stranded nicks across the HJ at symmetrical positions within the homologous arms, yielding a 5'-phosphate and a 3'-hydroxyl group; requires a central core of homology in the junction. The consensus cleavage sequence is 5'-(A/T)TT(C/G)-3'. Cleavage occurs on the 3'-side of the TT dinucleotide at the point of strand exchange. HJ branch migration catalyzed by RuvA-RuvB allows RuvC to scan DNA until it finds its consensus sequence, where it cleaves and resolves the cruciform DNA. This is Crossover junction endodeoxyribonuclease RuvC from Rickettsia conorii (strain ATCC VR-613 / Malish 7).